A 138-amino-acid chain; its full sequence is MKRRRQRETALQVLFQAEVARISGERAFARTMELFGLNTEDFAYAQELVDGVLAKVDRLDRIISRVSHEWRLERMANVDRNIIRLALYEVFFRDDIPINVAVNEALELARTFGTEDSRRFVNGILGKVVEEPEEYRPE.

It belongs to the NusB family.

Its function is as follows. Involved in transcription antitermination. Required for transcription of ribosomal RNA (rRNA) genes. Binds specifically to the boxA antiterminator sequence of the ribosomal RNA (rrn) operons. The chain is Transcription antitermination protein NusB from Desulforudis audaxviator (strain MP104C).